Reading from the N-terminus, the 531-residue chain is Galactose/methyl galactoside import permease protein MglC (531 aa).

10 consecutive transmembrane segments (helical) span residues 193–213, 239–259, 267–287, 300–320, 326–346, 376–396, 424–444, 461–481, 483–503, and 505–525; these read FFLA…CIVV, MFYA…LSIG, VVTG…GLGP, VMSL…AGFF, IHPF…LFFG, LVTF…AWFI, FGVT…GAFF, LDAI…IGKL, GAVV…FLGI, and TNLQ…LDSV.

This sequence belongs to the binding-protein-dependent transport system permease family. AraH/RbsC subfamily. As to quaternary structure, the complex is composed of one ATP-binding protein (MglA), two transmembrane proteins (MglC) and a solute-binding protein (MglB).

The protein localises to the cell membrane. Part of the ABC transporter complex MglABC involved in galactose/methyl galactoside import. Probably responsible for the translocation of the substrate across the membrane. In Treponema pallidum (strain Nichols), this protein is Galactose/methyl galactoside import permease protein MglC (mglC).